Reading from the N-terminus, the 350-residue chain is Putative ankyrin repeat protein RBE_0589 (350 aa).

3 ANK repeats span residues 81 to 110 (DGFT…NPNI), 114 to 151 (DIVT…EPTD), and 153 to 182 (SGWT…NLDI).

This is Putative ankyrin repeat protein RBE_0589 from Rickettsia bellii (strain RML369-C).